Reading from the N-terminus, the 119-residue chain is Short coiled-coil protein A (119 aa).

Residues 1–10 (MEGDVDEDDG) are compositionally biased toward acidic residues. The interval 1 to 26 (MEGDVDEDDGTFTNISLADDSADGEP) is disordered. The stretch at 48-95 (MENQVEQEEKTRLINQVLELQHTLEDLSARVDAVKEENLKLKSENQVL) forms a coiled coil.

It belongs to the SCOC family.

The protein resides in the golgi apparatus membrane. Its subcellular location is the golgi apparatus. It localises to the trans-Golgi network. It is found in the cytoplasm. The protein localises to the cytosol. Positive regulator of amino acid starvation-induced autophagy. The chain is Short coiled-coil protein A (scoca) from Danio rerio (Zebrafish).